We begin with the raw amino-acid sequence, 208 residues long: GTP cyclohydrolase-2 (208 aa).

49–53 serves as a coordination point for GTP; it reads RLHSE. Residues C54, C65, and C67 each coordinate Zn(2+). GTP contacts are provided by residues Q70, 92 to 94, and T114; that span reads EGR. D126 functions as the Proton acceptor in the catalytic mechanism. R128 serves as the catalytic Nucleophile. Residues T149 and K154 each coordinate GTP.

It belongs to the GTP cyclohydrolase II family. Zn(2+) is required as a cofactor.

It carries out the reaction GTP + 4 H2O = 2,5-diamino-6-hydroxy-4-(5-phosphoribosylamino)-pyrimidine + formate + 2 phosphate + 3 H(+). It participates in cofactor biosynthesis; riboflavin biosynthesis; 5-amino-6-(D-ribitylamino)uracil from GTP: step 1/4. Catalyzes the conversion of GTP to 2,5-diamino-6-ribosylamino-4(3H)-pyrimidinone 5'-phosphate (DARP), formate and pyrophosphate. In Azotobacter vinelandii (strain DJ / ATCC BAA-1303), this protein is GTP cyclohydrolase-2.